We begin with the raw amino-acid sequence, 109 residues long: Aquaporin-2 (109 aa).

At 1-6 (SIAFSR) the chain is on the cytoplasmic side. A helical membrane pass occupies residues 7–27 (AVFSEFLATLLFVFFGLGSAL). Residues 28-35 (NWPQALPS) lie on the Extracellular side of the membrane. Residues 36–54 (VLQIAMAFGLAIGTLVQTL) form a helical membrane-spanning segment. Over 55 to 59 (GHISG) the chain is Cytoplasmic. An intramembrane region (discontinuously helical) is located at residues 60 to 69 (AHINPAVTVA). The NPA 1 motif lies at 63 to 65 (NPA). At 70 to 80 (CLVGCHVSFLR) the chain is on the cytoplasmic side. Residues 81 to 102 (ATFYLAAQLLGAVAGAALLHEL) traverse the membrane as a helical segment. At 103 to 109 (TPPDIRG) the chain is on the extracellular side.

The protein belongs to the MIP/aquaporin (TC 1.A.8) family. Homotetramer. Post-translationally, serine phosphorylation is necessary and sufficient for expression at the apical membrane. Endocytosis is not phosphorylation-dependent. N-glycosylated.

Its subcellular location is the apical cell membrane. It localises to the basolateral cell membrane. The protein resides in the cell membrane. It is found in the cytoplasmic vesicle membrane. The protein localises to the golgi apparatus. Its subcellular location is the trans-Golgi network membrane. It carries out the reaction H2O(in) = H2O(out). The enzyme catalyses glycerol(in) = glycerol(out). Forms a water-specific channel that provides the plasma membranes of renal collecting duct with high permeability to water, thereby permitting water to move in the direction of an osmotic gradient. Plays an essential role in renal water homeostasis. Could also be permeable to glycerol. The polypeptide is Aquaporin-2 (Elephas maximus (Indian elephant)).